Consider the following 324-residue polypeptide: UPF0158 protein CPn_0518/CP_0235/CPj0518/CpB0539 (324 aa).

Belongs to the UPF0158 family.

In Chlamydia pneumoniae (Chlamydophila pneumoniae), this protein is UPF0158 protein CPn_0518/CP_0235/CPj0518/CpB0539.